Reading from the N-terminus, the 458-residue chain is Adenylosuccinate synthetase (458 aa).

GTP is bound by residues 17-23 (GDEGKGK) and 45-47 (GHT). The Proton acceptor role is filled by D18. The Mg(2+) site is built by D18 and G45. Residues 18-21 (DEGK), 43-46 (NAGH), T137, R151, Q247, T262, and R330 each bind IMP. H46 functions as the Proton donor in the catalytic mechanism. 326 to 332 (VTTGRSR) provides a ligand contact to substrate. Residues R332, 358-360 (KLD), and 440-442 (STS) contribute to the GTP site.

The protein belongs to the adenylosuccinate synthetase family. Homodimer. Mg(2+) is required as a cofactor.

It localises to the cytoplasm. It catalyses the reaction IMP + L-aspartate + GTP = N(6)-(1,2-dicarboxyethyl)-AMP + GDP + phosphate + 2 H(+). The protein operates within purine metabolism; AMP biosynthesis via de novo pathway; AMP from IMP: step 1/2. In terms of biological role, plays an important role in the de novo pathway of purine nucleotide biosynthesis. Catalyzes the first committed step in the biosynthesis of AMP from IMP. The polypeptide is Adenylosuccinate synthetase (Acidovorax sp. (strain JS42)).